The primary structure comprises 1229 residues: Receptor-type adenylate cyclase GRESAG 4.3 (1229 aa).

Over 1-24 (MIARVCRLTKHSKPPHLPITLTTP) the chain is Cytoplasmic. A helical membrane pass occupies residues 25–45 (TLFLVVLVLLQLHPICVLVNV). Over 46–845 (DDGGGVTVKA…PNGNALTPAQ (800 aa)) the chain is Extracellular. Residues asparagine 77, asparagine 84, asparagine 626, asparagine 693, and asparagine 768 are each glycosylated (N-linked (GlcNAc...) asparagine). The chain crosses the membrane as a helical span at residues 846 to 866 (LAGVVGGSLFVVALAICLSVL). The Cytoplasmic portion of the chain corresponds to 867–1229 (ACFTLRGTRD…SNDLSDMIRV (363 aa)). Residues 889–1043 (TLIFTDIESS…RTSNMAARTE (155 aa)) enclose the Guanylate cyclase domain. Residues aspartate 894 and aspartate 937 each contribute to the Mg(2+) site.

This sequence belongs to the adenylyl cyclase class-3 family. Mg(2+) is required as a cofactor.

The protein localises to the membrane. It catalyses the reaction ATP = 3',5'-cyclic AMP + diphosphate. In terms of biological role, could act as a receptor for an unknown ligand. The polypeptide is Receptor-type adenylate cyclase GRESAG 4.3 (GRESAG 4.3) (Trypanosoma brucei brucei).